Consider the following 379-residue polypeptide: Trans-prenyltransferase abpB (379 aa).

Substrate is bound by residues 90 to 91 (RL), Arg112, Lys197, Arg264, Lys266, Tyr268, and Tyr338.

It belongs to the tryptophan dimethylallyltransferase family.

It carries out the reaction aspulvinone E + 2 dimethylallyl diphosphate = aspulvinone H + 2 diphosphate. It catalyses the reaction butyrolactone II + dimethylallyl diphosphate = butyrolactone I + diphosphate. Its pathway is secondary metabolite biosynthesis. Trans-prenyltransferase that acts in both the aspulvinones and butyrolactones pathways. Prenylates aspulvinone E and butyrolactone II to yield repectively aspulvinone H and butyrolactone I. The protein is Trans-prenyltransferase abpB of Aspergillus terreus (strain NIH 2624 / FGSC A1156).